The chain runs to 166 residues: Small ribosomal subunit protein uS5 (166 aa).

One can recognise an S5 DRBM domain in the interval 10–73 (QIEKLISLNR…TSARKNLRFV (64 aa)).

The protein belongs to the universal ribosomal protein uS5 family. Part of the 30S ribosomal subunit. Contacts proteins S4 and S8.

In terms of biological role, with S4 and S12 plays an important role in translational accuracy. Functionally, located at the back of the 30S subunit body where it stabilizes the conformation of the head with respect to the body. The chain is Small ribosomal subunit protein uS5 from Borrelia garinii subsp. bavariensis (strain ATCC BAA-2496 / DSM 23469 / PBi) (Borreliella bavariensis).